The sequence spans 295 residues: Acetylglutamate kinase (295 aa).

Substrate is bound by residues G64–G65, R86, and N190.

Belongs to the acetylglutamate kinase family. ArgB subfamily.

The protein localises to the cytoplasm. The catalysed reaction is N-acetyl-L-glutamate + ATP = N-acetyl-L-glutamyl 5-phosphate + ADP. It functions in the pathway amino-acid biosynthesis; L-arginine biosynthesis; N(2)-acetyl-L-ornithine from L-glutamate: step 2/4. Functionally, catalyzes the ATP-dependent phosphorylation of N-acetyl-L-glutamate. The chain is Acetylglutamate kinase from Pelotomaculum thermopropionicum (strain DSM 13744 / JCM 10971 / SI).